The chain runs to 149 residues: MQVILLDKVANLGSLGDQVNVKAGYARNFLVPQGKAVPATKKNIEFFEARRAELEAKLAEVLAAANARAEKINALETVTIASKAGDEGKLFGSIGTRDIADAVTAAGVEVAKSEVRLPNGVLRTTGEHEVSFQVHSEVFAKVIVNVVAE.

At Lys89 the chain carries N6-acetyllysine.

This sequence belongs to the bacterial ribosomal protein bL9 family.

Binds to the 23S rRNA. The polypeptide is Large ribosomal subunit protein bL9 (Shigella boydii serotype 18 (strain CDC 3083-94 / BS512)).